The following is a 265-amino-acid chain: Regulator of calcineurin 2 (265 aa).

A phosphoserine mark is found at S104 and S110. Disordered stretches follow at residues 127–213 and 242–265; these read LLSI…DKSA and ENDVNATASNPPKSPSITVNEFFH. Position 132 is a phosphothreonine (T132). 2 stretches are compositionally biased toward low complexity: residues 141-161 and 182-202; these read SSSLNKGGSSLSPDKSSLESP and LSRSSSSTSNLSLNRSSQTSL. Phosphoserine is present on residues S152, S157, S160, S183, S187, S193, S201, and S255.

Post-translationally, phosphorylation of Ser-152 and Ser-160 is induced 2-fold in response to mating pheromone.

The protein localises to the cytoplasm. In Saccharomyces cerevisiae (strain ATCC 204508 / S288c) (Baker's yeast), this protein is Regulator of calcineurin 2 (RCN2).